A 657-amino-acid chain; its full sequence is Outer dense fiber protein 2 (657 aa).

A phosphoserine mark is found at serine 73 and serine 74. Threonine 92 bears the Phosphothreonine mark. Serine 95 carries the post-translational modification Phosphoserine; by TSSK4. 2 positions are modified to phosphoserine: serine 106 and serine 109. Threonine 110 is subject to Phosphothreonine. Phosphoserine is present on residues serine 115 and serine 129. Lysine 138 participates in a covalent cross-link: Glycyl lysine isopeptide (Lys-Gly) (interchain with G-Cter in SUMO2). Serine 139 is modified (phosphoserine). Coiled coils occupy residues 144-423 (QKGE…AEQL) and 461-635 (EIIV…SDLR). Residue threonine 231 is modified to Phosphothreonine. Phosphoserine occurs at positions 261 and 632.

The protein belongs to the ODF2 family. Self-associates. Associates with microtubules and forms a fibrillar structure partially linked to the microtubule network. Interacts via its C-terminus with PLK1. Interacts with ODF1. Interacts with MARK4; the interaction is required for localization of ODF2 to centrioles. Interacts with TSSK4. Interacts with AKNA. Interacts with CFAP58. Interacts with BBOF1. Interacts with CCDC38. Interacts with CCDC42. Post-translationally, tyrosine phosphorylated. Phosphorylated on Ser-95 by TSSK4.

The protein localises to the cytoplasm. It is found in the cytoskeleton. It localises to the microtubule organizing center. The protein resides in the centrosome. Its subcellular location is the cell projection. The protein localises to the cilium. It is found in the centriole. It localises to the spindle pole. The protein resides in the flagellum. Seems to be a major component of sperm tail outer dense fibers (ODF). ODFs are filamentous structures located on the outside of the axoneme in the midpiece and principal piece of the mammalian sperm tail and may help to maintain the passive elastic structures and elastic recoil of the sperm tail. May have a modulating influence on sperm motility. Functions as a general scaffold protein that is specifically localized at the distal/subdistal appendages of mother centrioles. Component of the centrosome matrix required for the localization of PLK1 and NIN to the centrosomes. Required for the formation and/or maintenance of normal CETN1 assembly. The chain is Outer dense fiber protein 2 (ODF2) from Bos taurus (Bovine).